Here is a 475-residue protein sequence, read N- to C-terminus: MNLETIIGLEVHVELKTNSKIFSASPTEFGAEPNTQTSVIDLGYPGVLPTLNKEAVNFAMKAAMALNCEIATETKFDRKNYFYPDNPKAYQISQFDKPIGENGWIEIEVDGKKKRIGITRLHLEEDAGKSTHTADGSLVDYNRQGMPLIEIVSEPDMRTPEEAYAYLEKLKSIIQYTGVSDCKMEEGSLRCDANISLRPVGQEKFGTKAELKNLNSFTYVQKGLEHEQVRQEKELLSGGIIQQETRRYDEATKKTILMRVKEGSDDYRYFPEPDLVELYIDDAWKEEVRASIPELPDARKARYVAEIGLPAYDAHVLTLTKEMSDFFEAAIADGADAKLTSNWLMGEVLAYLNKQQKELKDVALTPAGLSKMVQLIEKGTISSKIAKKVFNELIEKGGDPEEIVKAKGLVQISDEGTLRKVVTEILDNNEQSIEDFKNGKDRAIGFLVGQIMKATKGQANPPLVNKILLEEINKR.

It belongs to the GatB/GatE family. GatB subfamily. As to quaternary structure, heterotrimer of A, B and C subunits.

The catalysed reaction is L-glutamyl-tRNA(Gln) + L-glutamine + ATP + H2O = L-glutaminyl-tRNA(Gln) + L-glutamate + ADP + phosphate + H(+). The enzyme catalyses L-aspartyl-tRNA(Asn) + L-glutamine + ATP + H2O = L-asparaginyl-tRNA(Asn) + L-glutamate + ADP + phosphate + 2 H(+). In terms of biological role, allows the formation of correctly charged Asn-tRNA(Asn) or Gln-tRNA(Gln) through the transamidation of misacylated Asp-tRNA(Asn) or Glu-tRNA(Gln) in organisms which lack either or both of asparaginyl-tRNA or glutaminyl-tRNA synthetases. The reaction takes place in the presence of glutamine and ATP through an activated phospho-Asp-tRNA(Asn) or phospho-Glu-tRNA(Gln). In Bacillus anthracis (strain A0248), this protein is Aspartyl/glutamyl-tRNA(Asn/Gln) amidotransferase subunit B.